A 444-amino-acid chain; its full sequence is Zinc finger protein ZIC 1 (444 aa).

The C2H2-type 1 zinc-finger motif lies at 222 to 257 (LICKWIEPEQLANPKKSCNKTFSTMHELVTHVTVEH). The C2H2-type 2; degenerate zinc finger occupies 271-293 (EECPREGKPFKAKYKLVNHIRVH). 3 consecutive C2H2-type zinc fingers follow at residues 299-323 (FPCP…KRTH), 329-353 (FKCE…MHVH), and 359-381 (YLCK…MKVH). The disordered stretch occupies residues 372-432 (SSLRKHMKVH…SSAGHHTASH (61 aa)). Residues 383-432 (SSSQGSQPSPAASSGYESSTPPTIVSPSTENQTASSLSPSSSAGHHTASH) are compositionally biased toward low complexity.

It belongs to the GLI C2H2-type zinc-finger protein family.

The protein localises to the nucleus. Its subcellular location is the cytoplasm. Acts as a transcriptional activator. Involved in neurogenesis. Plays important roles in the early stage of organogenesis of the CNS, as well as during dorsal spinal cord development and maturation of the cerebellum. Binds to the minimal GLI-consensus sequence 5'-TGGGTGGTC-3'. The protein is Zinc finger protein ZIC 1 (ZIC1) of Gallus gallus (Chicken).